A 420-amino-acid chain; its full sequence is Dihydrolipoyllysine-residue succinyltransferase component of 2-oxoglutarate dehydrogenase complex (420 aa).

Positions 3-78 (KINILVPDLP…ISQQTLGEIN (76 aa)) constitute a Lipoyl-binding domain. Lys44 carries the post-translational modification N6-lipoyllysine. Residues His391 and Asp395 contribute to the active site.

Belongs to the 2-oxoacid dehydrogenase family. In terms of assembly, forms a 24-polypeptide structural core with octahedral symmetry. Part of the 2-oxoglutarate dehydrogenase (OGDH) complex composed of E1 (2-oxoglutarate dehydrogenase), E2 (dihydrolipoamide succinyltransferase) and E3 (dihydrolipoamide dehydrogenase); the complex contains multiple copies of the three enzymatic components (E1, E2 and E3). The cofactor is (R)-lipoate.

It carries out the reaction N(6)-[(R)-dihydrolipoyl]-L-lysyl-[protein] + succinyl-CoA = N(6)-[(R)-S(8)-succinyldihydrolipoyl]-L-lysyl-[protein] + CoA. It functions in the pathway amino-acid degradation; L-lysine degradation via saccharopine pathway; glutaryl-CoA from L-lysine: step 6/6. Its function is as follows. E2 component of the 2-oxoglutarate dehydrogenase (OGDH) complex which catalyzes the second step in the conversion of 2-oxoglutarate to succinyl-CoA and CO(2). The polypeptide is Dihydrolipoyllysine-residue succinyltransferase component of 2-oxoglutarate dehydrogenase complex (sucB) (Buchnera aphidicola subsp. Acyrthosiphon pisum (strain APS) (Acyrthosiphon pisum symbiotic bacterium)).